Here is a 638-residue protein sequence, read N- to C-terminus: 1-deoxy-D-xylulose-5-phosphate synthase (638 aa).

Thiamine diphosphate is bound by residues histidine 79 and 120 to 122; that span reads AHS. Residue aspartate 151 participates in Mg(2+) binding. Thiamine diphosphate is bound by residues 152 to 153, asparagine 180, tyrosine 289, and glutamate 371; that span reads GA. Asparagine 180 contributes to the Mg(2+) binding site.

This sequence belongs to the transketolase family. DXPS subfamily. In terms of assembly, homodimer. Mg(2+) is required as a cofactor. It depends on thiamine diphosphate as a cofactor.

The catalysed reaction is D-glyceraldehyde 3-phosphate + pyruvate + H(+) = 1-deoxy-D-xylulose 5-phosphate + CO2. The protein operates within metabolic intermediate biosynthesis; 1-deoxy-D-xylulose 5-phosphate biosynthesis; 1-deoxy-D-xylulose 5-phosphate from D-glyceraldehyde 3-phosphate and pyruvate: step 1/1. In terms of biological role, catalyzes the acyloin condensation reaction between C atoms 2 and 3 of pyruvate and glyceraldehyde 3-phosphate to yield 1-deoxy-D-xylulose-5-phosphate (DXP). This is 1-deoxy-D-xylulose-5-phosphate synthase from Rhizobium rhizogenes (strain K84 / ATCC BAA-868) (Agrobacterium radiobacter).